Reading from the N-terminus, the 519-residue chain is Cytosol aminopeptidase (519 aa).

K45 carries the N6-succinyllysine modification. The residue at position 54 (S54) is a Phosphoserine. 2 positions are modified to N6-succinyllysine: K61 and K103. S180 and S194 each carry phosphoserine. Zn(2+)-binding residues include L202 and M203. K221 carries the post-translational modification N6-acetyllysine; alternate. The residue at position 221 (K221) is an N6-succinyllysine; alternate. Residue S238 is modified to Phosphoserine. Zn(2+)-binding residues include K282 and D287. 4 residues coordinate substrate: K282, D287, S292, and K294. Residue D287 participates in Mg(2+) binding. K294 is a catalytic residue. Zn(2+) is bound by residues R303, D305, D364, and E366. D305 and D364 together coordinate substrate. Positions 364 and 366 each coordinate Mg(2+). R368 is an active-site residue. At K455 the chain carries N6-acetyllysine; alternate. An N6-succinyllysine; alternate modification is found at K455. K476 is modified (N6-succinyllysine). K489 carries the N6-acetyllysine; alternate modification. K489 is subject to N6-succinyllysine; alternate.

It belongs to the peptidase M17 family. In terms of assembly, homohexamer. Requires Zn(2+) as cofactor. It depends on Mn(2+) as a cofactor.

Its subcellular location is the cytoplasm. It carries out the reaction Release of an N-terminal amino acid, Xaa-|-Yaa-, in which Xaa is preferably Leu, but may be other amino acids including Pro although not Arg or Lys, and Yaa may be Pro. Amino acid amides and methyl esters are also readily hydrolyzed, but rates on arylamides are exceedingly low.. The catalysed reaction is an S-substituted L-cysteinylglycine + H2O = an S-substituted L-cysteine + glycine. It catalyses the reaction L-cysteinylglycine + H2O = L-cysteine + glycine. The enzyme catalyses S-benzyl-L-cysteinylglycine + H2O = S-benzyl-L-cysteine + glycine. It carries out the reaction Release of N-terminal proline from a peptide.. Its function is as follows. Cytosolic metallopeptidase that catalyzes the removal of unsubstituted N-terminal hydrophobic amino acids from various peptides. The presence of Zn(2+) ions is essential for the peptidase activity, and the association with other cofactors can modulate the substrate spectificity of the enzyme. For instance, in the presence of Mn(2+), it displays a specific Cys-Gly hydrolyzing activity of Cys-Gly-S-conjugates. Involved in the metabolism of glutathione and in the degradation of glutathione S-conjugates, which may play a role in the control of the cell redox status. The polypeptide is Cytosol aminopeptidase (Mus musculus (Mouse)).